A 169-amino-acid polypeptide reads, in one-letter code: MLPSTMFLVHLPLSTNRLHCLRNTSLESYLCSFVHLNHPLHISDRVILISLHEAVRFSFAFSFPRGTLSIAYCLMSSVSTSSEAIMSTELLANYCHSSLHVCICISSFPNETGNHDSFPGAVVSISDQPTDQCKLAAKELPLRNLLECRFFDCMGEEDLINLGVIGTER.

Belongs to the FAM106 family.

This is Protein FAM106A (FAM106A) from Homo sapiens (Human).